The following is a 96-amino-acid chain: Putative regulatory protein Teth514_1762 (96 aa).

This sequence belongs to the RemA family.

This chain is Putative regulatory protein Teth514_1762, found in Thermoanaerobacter sp. (strain X514).